We begin with the raw amino-acid sequence, 790 residues long: N-methylputrescine oxidase 1, peroxisomal (790 aa).

Residues 1–23 (MATTKQKVTAPSPSPSSSTASCC) are disordered. Residues 9–23 (TAPSPSPSSSTASCC) show a composition bias toward low complexity. 423 to 434 (AFDAGEDGLGKN) is a binding site for substrate. Asp425 functions as the Proton acceptor in the catalytic mechanism. Cys444 and Cys470 form a disulfide bridge. 506–511 (VANYEY) contacts substrate. The active-site Schiff-base intermediate with substrate; via topaquinone is the Tyr509. 2',4',5'-topaquinone is present on Tyr509. Cu cation is bound by residues His559 and His561. The Mn(2+) site is built by Asp714 and Ile715. Residue His725 participates in Cu cation binding.

Belongs to the copper/topaquinone oxidase family. Homodimer. The cofactor is Cu cation. Requires Zn(2+) as cofactor. L-topaquinone is required as a cofactor. In terms of processing, topaquinone (TPQ) is generated by copper-dependent autoxidation of a specific tyrosyl residue. As to expression, mainly expressed in roots, and, to a lower extent, in stems.

The protein localises to the peroxisome. The enzyme catalyses a primary methyl amine + O2 + H2O = an aldehyde + H2O2 + NH4(+). The catalysed reaction is N-methylputrescine + O2 + H2O = 4-methylaminobutanal + H2O2 + NH4(+). Its pathway is alkaloid biosynthesis; nicotine biosynthesis. Its function is as follows. Involved in the biosynthesis of pyridine alkaloid natural products, leading mainly to the production of anabasine, anatabine, nicotine and nornicotine, effective deterrents against herbivores with antiparasitic and pesticide properties (neurotoxins); nornicotine serves as the precursor in the synthesis of the carcinogen compound N'-nitrosonornicotine (NNN). Amine oxidase which mediates the deamination of N-methylputrescine to produce 4-methylaminobutanal. Oxidizes preferentially N-methylated amines. The sequence is that of N-methylputrescine oxidase 1, peroxisomal from Nicotiana tabacum (Common tobacco).